Here is a 255-residue protein sequence, read N- to C-terminus: MSIKVIIAGFKGKMGQAAYKMVTEDSELELVGLLDPFTDEKEVAGVPVFNAKEELAGLEAHVWVDFTTPKVAYDNTRFALEQGFCPVVGTTGFTPEQLEELITLSREKKLGGLIAPNFALGAVLLMQFAAQAAKYFANVEIIELHHDQKKDAPSGTAIKTAELISQVRPSKQQGAADEEESIVGARGADFDGMRIHSVRLPGLVAHQEVIFGSQGEGLTMRHDSYDRASFMTGVNLAIKEVVKRSELVYGLEHLL.

Residues glycine 9–methionine 14, glycine 89–threonine 91, and alanine 115–phenylalanine 118 each bind NAD(+). Histidine 145 functions as the Proton donor/acceptor in the catalytic mechanism. Histidine 146 lines the (S)-2,3,4,5-tetrahydrodipicolinate pocket. Lysine 149 (proton donor) is an active-site residue. Residue glycine 155–threonine 156 participates in (S)-2,3,4,5-tetrahydrodipicolinate binding.

It belongs to the DapB family.

It is found in the cytoplasm. The enzyme catalyses (S)-2,3,4,5-tetrahydrodipicolinate + NAD(+) + H2O = (2S,4S)-4-hydroxy-2,3,4,5-tetrahydrodipicolinate + NADH + H(+). It catalyses the reaction (S)-2,3,4,5-tetrahydrodipicolinate + NADP(+) + H2O = (2S,4S)-4-hydroxy-2,3,4,5-tetrahydrodipicolinate + NADPH + H(+). Its pathway is amino-acid biosynthesis; L-lysine biosynthesis via DAP pathway; (S)-tetrahydrodipicolinate from L-aspartate: step 4/4. Its function is as follows. Catalyzes the conversion of 4-hydroxy-tetrahydrodipicolinate (HTPA) to tetrahydrodipicolinate. This is 4-hydroxy-tetrahydrodipicolinate reductase from Streptococcus sanguinis (strain SK36).